Reading from the N-terminus, the 295-residue chain is WHI2-like protein P4H10.16c (295 aa).

Belongs to the WHI2 family.

It localises to the cytoplasm. The protein localises to the nucleus. This Schizosaccharomyces pombe (strain 972 / ATCC 24843) (Fission yeast) protein is WHI2-like protein P4H10.16c.